A 460-amino-acid polypeptide reads, in one-letter code: Cysteine--tRNA ligase (460 aa).

Position 28 (Cys-28) interacts with Zn(2+). Residues 30–40 carry the 'HIGH' region motif; it reads VTIYDLCHIGH. 3 residues coordinate Zn(2+): Cys-209, His-234, and Glu-238. The short motif at 266–270 is the 'KMSKS' region element; sequence KMSKS. Lys-269 is an ATP binding site.

Belongs to the class-I aminoacyl-tRNA synthetase family. As to quaternary structure, monomer. The cofactor is Zn(2+).

The protein localises to the cytoplasm. It carries out the reaction tRNA(Cys) + L-cysteine + ATP = L-cysteinyl-tRNA(Cys) + AMP + diphosphate. This chain is Cysteine--tRNA ligase, found in Vibrio parahaemolyticus serotype O3:K6 (strain RIMD 2210633).